Here is a 66-residue protein sequence, read N- to C-terminus: MRLAYLLLLLVAVLFQAGGGSAKPIMFFEMQACWSHSGVCRDKSERNCKPMAWTYCENRNQKCCEY.

The first 22 residues, 1–22, serve as a signal peptide directing secretion; it reads MRLAYLLLLLVAVLFQAGGGSA. Residues 23–24 constitute a propeptide that is removed on maturation; it reads KP. M26 is modified (D-methionine; in form DLP-2). 3 cysteine pairs are disulfide-bonded: C33/C63, C40/C56, and C48/C64.

Stereoinversion of L-Met-26 (in DLP-4) to D-Met-26 (in DLP-2). Produced by the crural gland and detected in venom from the spur located on each male hind leg. Is also widely expressed in both male and female tissues, including brain, intestine, kidney, lung, spleen and testis.

The protein localises to the secreted. Its function is as follows. Does not show antimicrobial, myotoxic, hemolytic and cell-promoting activities. The polypeptide is Defensin-like peptide 2/4 (Ornithorhynchus anatinus (Duckbill platypus)).